A 153-amino-acid polypeptide reads, in one-letter code: Transthyretin (153 aa).

A signal peptide spans 1 to 19; it reads MASFKSFLLLALLAIVSEA. Position 34 is a sulfocysteine (C34). K39 and E78 together coordinate L-thyroxine. N81 carries an N-linked (GlcNAc...) asparagine glycan. S141 serves as a coordination point for L-thyroxine.

The protein belongs to the transthyretin family. Homotetramer. Dimer of dimers. In the homotetramer, subunits assemble around a central channel that can accommodate two ligand molecules. Interacts with rbp4. In terms of processing, sulfonation of the reactive cysteine Cys-34 enhances the stability of the native conformation of TTR, avoiding misassembly of the protein leading to amyloid formation. Detected in plasma (at protein level). Expressed during metamorphosis in tadpole liver, but not in tadpole brain nor adult liver. Between 1.5 and 3 days of development, also expressed in the mesoderm of the kidney.

Its subcellular location is the secreted. In terms of biological role, thyroid hormone-binding protein, with a much higher binding affinity for triiodothyronine (T3) than for thyroxine (T4). Probably transports triiodothyronine from the bloodstream to the brain. The polypeptide is Transthyretin (ttr) (Xenopus laevis (African clawed frog)).